The sequence spans 831 residues: MGELFRSEEMTLAQLFLQSEAAYCCVSELGELGKVQFRDLNPDVNVFQRKFVNEVRRCEEMDRKLRFVEKEVKKANISILDTGENPEVPFPRDIIDLEANFEKIEIELKEINTNQEALKRNFLELTELKFILRKTQQFFDEMADPDLLEESSTLLEPSEMGRGAPLRLGFVAGVINRERIPTFERMLWRVCRGNVFLRQAQIENPLEDPVTGDSVHKSVFIIFFQGDQLKNRVKKICEGFRASLYPCPETPQERKEMATGVNTRIEDLQMVLNQTEDHRQRVLQAAAKSLRVWFIKVRKMKAIYHTLNLCNIDVTQKCLIAEVWCPVADLDSIQFALRRGTEHSGSTVPSILNRMQTNQTPPTYNKTNKFTYGFQNLVDAYGIGSYREINPAPYTIITFPFLFAVMFGDFGHGILMTLFAVWMVVRESRILSQKIDNELFSMMFSGRYIILLMGLFSTYTGLIYNDCFSKALNLFGSSWSVRPMFTDTWSEDLLKHTSVLQLNPNVTGVFNGPYPFGIDPIWSLATNKLTFLNSFKMKMSVILGIIHMIFGVALSVLNHIYFKKPLNIYLSFIPEMIFMTTLFGYLVILIIYKWCAYDVSTSMVAPSLLIHFINMFLFSYQDTSLPMLYKGQMGLQCFLVVCAIICVPWMLVLKPLILRRQYLRRKHLGTHNFGGIRVGNGPTEEDAEIIQHDQLSMHSDEEEEFDFGDTVVHQAIHTIEYCLGCISNTASYLRLWALSLAHAQLSEVLWTMVMHIGLNIRSLGGGIALVFIFSAFATLTIAILLIMEGLSAFLHALRLHWVEFRNKFYMGTGFKFLPFSFETIWEGKFDD.

At 1–388 (MGELFRSEEM…DAYGIGSYRE (388 aa)) the chain is on the cytoplasmic side. Residues 389–407 (INPAPYTIITFPFLFAVMF) form a helical membrane-spanning segment. Residues 408 to 409 (GD) are Vacuolar-facing. Residues 410-426 (FGHGILMTLFAVWMVVR) form a helical membrane-spanning segment. Residues 427–441 (ESRILSQKIDNELFS) lie on the Cytoplasmic side of the membrane. A helical transmembrane segment spans residues 442–471 (MMFSGRYIILLMGLFSTYTGLIYNDCFSKA). At 472–534 (LNLFGSSWSV…ATNKLTFLNS (63 aa)) the chain is on the vacuolar side. Residues 535–554 (FKMKMSVILGIIHMIFGVAL) form a helical membrane-spanning segment. The Cytoplasmic segment spans residues 555 to 572 (SVLNHIYFKKPLNIYLSF). Residues 573–593 (IPEMIFMTTLFGYLVILIIYK) form a helical membrane-spanning segment. Topologically, residues 594-638 (WCAYDVSTSMVAPSLLIHFINMFLFSYQDTSLPMLYKGQMGLQCF) are vacuolar. A helical transmembrane segment spans residues 639–658 (LVVCAIICVPWMLVLKPLIL). Residues 659-718 (RRQYLRRKHLGTHNFGGIRVGNGPTEEDAEIIQHDQLSMHSDEEEEFDFGDTVVHQAIHT) are Cytoplasmic-facing. The helical transmembrane segment at 719–743 (IEYCLGCISNTASYLRLWALSLAHA) threads the bilayer. At 744 to 764 (QLSEVLWTMVMHIGLNIRSLG) the chain is on the vacuolar side. A helical membrane pass occupies residues 765 to 803 (GGIALVFIFSAFATLTIAILLIMEGLSAFLHALRLHWVE). At 804 to 831 (FRNKFYMGTGFKFLPFSFETIWEGKFDD) the chain is on the cytoplasmic side.

The protein belongs to the V-ATPase 116 kDa subunit family. V-ATPase is a heteromultimeric enzyme made up of two complexes: the ATP-hydrolytic V1 complex and the proton translocation V0 complex. The V1 complex consists of three catalytic AB heterodimers that form a heterohexamer, three peripheral stalks each consisting of EG heterodimers, one central rotor including subunits D and F, and the regulatory subunits C and H. The proton translocation complex V0 consists of the proton transport subunit a, a ring of proteolipid subunits c9c'', rotary subunit d, subunits e and f, and two accessory subunits.

The protein resides in the cytoplasmic vesicle. It localises to the clathrin-coated vesicle membrane. The protein localises to the secretory vesicle. Its subcellular location is the synaptic vesicle membrane. It is found in the melanosome. Functionally, subunit of the V0 complex of vacuolar(H+)-ATPase (V-ATPase), a multisubunit enzyme composed of a peripheral complex (V1) that hydrolyzes ATP and a membrane integral complex (V0) that translocates protons. V-ATPase is responsible for acidifying and maintaining the pH of intracellular compartments and in some cell types, is targeted to the plasma membrane, where it is responsible for acidifying the extracellular environment. Required for assembly and activity of the vacuolar ATPase. The chain is V-type proton ATPase 116 kDa subunit a1 (atp6v0a1) from Xenopus laevis (African clawed frog).